We begin with the raw amino-acid sequence, 301 residues long: G-protein coupled receptor homolog U51 (301 aa).

Over 1-15 (MEKETKSLAWPATAE) the chain is Extracellular. Residues 16 to 36 (FYGWVFIFSSIQLCTMVLLTV) traverse the membrane as a helical segment. Residues 37–48 (RFNSFKVGREYA) are Cytoplasmic-facing. Residues 49 to 69 (VFTFAGMSFNCFLLPIKMGLL) form a helical membrane-spanning segment. The Extracellular portion of the chain corresponds to 70 to 82 (SGHWSLPRDFCAI). The chain crosses the membrane as a helical span at residues 83-103 (LLYIDDFSIYFSSWSLVFMAI). Topologically, residues 104 to 122 (ERINHFCYSTPLLNENSKA) are cytoplasmic. A helical transmembrane segment spans residues 123–143 (LAKVCFPIVWIISGVQALQML). The Extracellular portion of the chain corresponds to 144-168 (NNYKATALQNETPQCFLAFLRSGYD). The chain crosses the membrane as a helical span at residues 169–189 (MWLMLVYSVMIPVMLVFIYIY). At 190-199 (SKNFMLLKDE) the chain is on the cytoplasmic side. A helical transmembrane segment spans residues 200–220 (LSTVTTYLCIYLLLGTIAHLP). The Extracellular segment spans residues 221–238 (KAGLSEIESDKIFYGLRD). Residues 239–259 (IFMALPVLKVYYIPVMAYCMA) form a helical membrane-spanning segment. The Cytoplasmic segment spans residues 260–301 (CDDHTVPVRLCSIWLVNLCKKCFSCTRREKESDLEVGIKMLK).

Belongs to the G-protein coupled receptor 1 family.

Its subcellular location is the host cell membrane. In Homo sapiens (Human), this protein is G-protein coupled receptor homolog U51 (U51).